The primary structure comprises 669 residues: Serine/threonine-protein kinase hippo (669 aa).

Phosphoserine is present on residues Ser30 and Ser33. Residues 42–293 (FDIMYKLGEG…ATELLEHEFI (252 aa)) enclose the Protein kinase domain. Residues 48 to 56 (LGEGSYGSV) and Lys71 each bind ATP. Catalysis depends on Asp161, which acts as the Proton acceptor. Phosphothreonine; by Tao is present on Thr195. The span at 432–445 (MVINSDSDDSTTAK) shows a compositional bias: polar residues. The disordered stretch occupies residues 432 to 508 (MVINSDSDDS…QQQQQDEQHL (77 aa)). Residues 460 to 479 (FLEHFDRKNAGDGRGDEKPI) are compositionally biased toward basic and acidic residues. A compositionally biased stretch (low complexity) spans 490-503 (QQQQQQQQQQQQQQ). An SARAH domain is found at 608–655 (FEFLKFLTFDDLNQRLCNIDHEMELEIEQLNKKYNAKRQPIVDAMNAK).

Belongs to the protein kinase superfamily. STE Ser/Thr protein kinase family. STE20 subfamily. Homodimer. Interacts with Sav and Wts. Interacts (via SARAH domain) with Ex. Interacts with Kibra. In terms of processing, autophosphorylated. As to expression, expressed in CNS during embryogenesis. In third instar larvae, it is expressed throughout all imaginal disks.

Its subcellular location is the apical cell membrane. The protein localises to the cytoplasm. It catalyses the reaction L-seryl-[protein] + ATP = O-phospho-L-seryl-[protein] + ADP + H(+). The enzyme catalyses L-threonyl-[protein] + ATP = O-phospho-L-threonyl-[protein] + ADP + H(+). Its function is as follows. Plays a key role in the Hippo/SWH (Sav/Wts/Hpo) signaling pathway, a signaling pathway that plays a pivotal role in organ size control and tumor suppression by restricting proliferation and promoting apoptosis. The core of this pathway is composed of a kinase cascade wherein Hippo (Hpo), in complex with its regulatory protein Salvador (Sav), phosphorylates and activates Warts (Wts) in complex with its regulatory protein Mats, which in turn phosphorylates and inactivates the Yorkie (Yki) oncoprotein. The Hippo/SWH signaling pathway inhibits the activity of the transcriptional complex formed by Scalloped (sd) and Yki and the target genes of this pathway include cyclin-E (cycE), diap1 and bantam. Phosphorylates Sav, Wts and Th/DIAP1. Regulates the level of Th/DIAP1 apoptosis inhibitor. The polypeptide is Serine/threonine-protein kinase hippo (hpo) (Drosophila melanogaster (Fruit fly)).